The sequence spans 577 residues: Thiol:disulfide interchange protein DsbD (577 aa).

The first 23 residues, 1–23, serve as a signal peptide directing secretion; that stretch reads MAQRIFTLIFLLWTAVGTPQVAA. 2 disulfides stabilise this stretch: Cys131-Cys137 and Cys194-Cys316. The next 7 helical transmembrane spans lie at 182–202, 225–245, 255–275, 308–328, 338–358, 369–389, and 396–416; these read ALLI…YPLI, YVQG…AAGL, YILI…FGLY, LAGL…LLYI, GGTL…VTLF, WMQY…VFLL, and AWGI…ALML. One can recognise a Thioredoxin domain in the interval 437–577; sequence VISAKPLQDW…FQAHLQKFSP (141 aa). Cysteines 492 and 495 form a disulfide.

This sequence belongs to the thioredoxin family. DsbD subfamily.

It is found in the cell inner membrane. It catalyses the reaction [protein]-dithiol + NAD(+) = [protein]-disulfide + NADH + H(+). It carries out the reaction [protein]-dithiol + NADP(+) = [protein]-disulfide + NADPH + H(+). In terms of biological role, required to facilitate the formation of correct disulfide bonds in some periplasmic proteins and for the assembly of the periplasmic c-type cytochromes. Acts by transferring electrons from cytoplasmic thioredoxin to the periplasm. This transfer involves a cascade of disulfide bond formation and reduction steps. The sequence is that of Thiol:disulfide interchange protein DsbD from Pectobacterium atrosepticum (strain SCRI 1043 / ATCC BAA-672) (Erwinia carotovora subsp. atroseptica).